The primary structure comprises 286 residues: Lipoyl synthase (286 aa).

[4Fe-4S] cluster-binding residues include Cys34, Cys39, Cys45, Cys60, Cys64, Cys67, and Ser271. The Radical SAM core domain occupies 46–260 (WESGTATFMI…EESAYSIGFS (215 aa)).

The protein belongs to the radical SAM superfamily. Lipoyl synthase family. The cofactor is [4Fe-4S] cluster.

The protein localises to the cytoplasm. It catalyses the reaction [[Fe-S] cluster scaffold protein carrying a second [4Fe-4S](2+) cluster] + N(6)-octanoyl-L-lysyl-[protein] + 2 oxidized [2Fe-2S]-[ferredoxin] + 2 S-adenosyl-L-methionine + 4 H(+) = [[Fe-S] cluster scaffold protein] + N(6)-[(R)-dihydrolipoyl]-L-lysyl-[protein] + 4 Fe(3+) + 2 hydrogen sulfide + 2 5'-deoxyadenosine + 2 L-methionine + 2 reduced [2Fe-2S]-[ferredoxin]. It participates in protein modification; protein lipoylation via endogenous pathway; protein N(6)-(lipoyl)lysine from octanoyl-[acyl-carrier-protein]: step 2/2. Its function is as follows. Catalyzes the radical-mediated insertion of two sulfur atoms into the C-6 and C-8 positions of the octanoyl moiety bound to the lipoyl domains of lipoate-dependent enzymes, thereby converting the octanoylated domains into lipoylated derivatives. This Picrophilus torridus (strain ATCC 700027 / DSM 9790 / JCM 10055 / NBRC 100828 / KAW 2/3) protein is Lipoyl synthase.